A 285-amino-acid chain; its full sequence is Putative hydrolase DDAH2 (285 aa).

Catalysis depends on histidine 171, which acts as the Proton donor. Residue cysteine 276 is the Nucleophile of the active site.

This sequence belongs to the DDAH family. Post-translationally, phosphorylated by TBK1. Phosphorylation inhibits the translocation into the mitochondrion upon Sendai viral infection. Detected in heart, placenta, lung, liver, skeletal muscle, kidney and pancreas, and at very low levels in brain.

It localises to the cytoplasm. Its subcellular location is the mitochondrion. Its function is as follows. Putative hydrolase with unknown substrate. Does not hydrolyze N(G),N(G)-dimethyl-L-arginine (ADMA) which acts as an inhibitor of NOS. In endothelial cells, induces expression of vascular endothelial growth factor (VEGF) via phosphorylation of the transcription factor SP1 by PKA in a process that is independent of NO and NO synthase. Similarly, enhances pancreatic insulin secretion through SP1-mediated transcriptional up-regulation of secretagogin/SCGN, an insulin vesicle docking protein. Upon viral infection, relocates to mitochondria where it promotes mitochondrial fission through activation of DNM1L leading to the inhibition of innate response activation mediated by MAVS. This Homo sapiens (Human) protein is Putative hydrolase DDAH2.